The sequence spans 155 residues: MKIYIIAVGKIKENYISDGIVFYLKKLRPYCEIEIKEVEEEKAPQNLSEKEKEEILRKEGERILSKIKKGSFVVSLAIEGKEIDSYKFSQFIKATFQSGYREMTFVIGGSLGLWENIKKQSHLNLSFSKMTFPHQLMRLILLEQLYLAFDGKNHL.

Residues L76, G108, and F127–F132 each bind S-adenosyl-L-methionine.

This sequence belongs to the RNA methyltransferase RlmH family. Homodimer.

It localises to the cytoplasm. The enzyme catalyses pseudouridine(1915) in 23S rRNA + S-adenosyl-L-methionine = N(3)-methylpseudouridine(1915) in 23S rRNA + S-adenosyl-L-homocysteine + H(+). Specifically methylates the pseudouridine at position 1915 (m3Psi1915) in 23S rRNA. The protein is Ribosomal RNA large subunit methyltransferase H 1 of Thermoanaerobacter pseudethanolicus (strain ATCC 33223 / 39E) (Clostridium thermohydrosulfuricum).